Reading from the N-terminus, the 341-residue chain is MAANKREPKVVVLGGGSWGTTVASICARRGPTLQWVRSAVTAQDINDNHRNSRYLGNDVVLSDTLRATTDFTEAANCADVVVMGVPSHGFRGVLVELSKELRPWVPVVSLVKGLEQGTNMRMSQIIEEVLPGHPAGILAGPNIAREVAEGYAAAAVLAMPDQHLATRLSAMFRTRRFRVYTTDDVVGVETAGALKNVFAIAVGMGYSLGIGENTRALVIARALREMTKLGVAMGGKSETFPGLAGLGDLIVTCTSQRSRNRHVGEQLGAGKPIDEIIASMSQVAEGVKAAGVVMEFANEFGLNMPIAREVDAVINHGSTVEQAYRGLIAEVPGHEVHGSGF.

Positions 17, 18, 37, and 112 each coordinate NADPH. Sn-glycerol 3-phosphate contacts are provided by K112 and G140. Residue A144 coordinates NADPH. 5 residues coordinate sn-glycerol 3-phosphate: K195, D248, S258, R259, and N260. Catalysis depends on K195, which acts as the Proton acceptor. R259 is an NADPH binding site. Residues V283 and E285 each coordinate NADPH.

Belongs to the NAD-dependent glycerol-3-phosphate dehydrogenase family.

It is found in the cytoplasm. The catalysed reaction is sn-glycerol 3-phosphate + NAD(+) = dihydroxyacetone phosphate + NADH + H(+). It carries out the reaction sn-glycerol 3-phosphate + NADP(+) = dihydroxyacetone phosphate + NADPH + H(+). It participates in membrane lipid metabolism; glycerophospholipid metabolism. In terms of biological role, catalyzes the reduction of the glycolytic intermediate dihydroxyacetone phosphate (DHAP) to sn-glycerol 3-phosphate (G3P), the key precursor for phospholipid synthesis. The protein is Glycerol-3-phosphate dehydrogenase [NAD(P)+] 1 of Mycobacterium bovis (strain ATCC BAA-935 / AF2122/97).